Reading from the N-terminus, the 124-residue chain is Small ribosomal subunit protein bS6 (124 aa).

The tract at residues 96-124 (ETGPSPMMKEVQREEAKKAAAAQPTEAQA) is disordered. Residues 114-124 (AAAAQPTEAQA) are compositionally biased toward low complexity.

Belongs to the bacterial ribosomal protein bS6 family.

In terms of biological role, binds together with bS18 to 16S ribosomal RNA. The protein is Small ribosomal subunit protein bS6 of Burkholderia vietnamiensis (strain G4 / LMG 22486) (Burkholderia cepacia (strain R1808)).